The following is a 710-amino-acid chain: Pentatricopeptide repeat-containing protein At5g39680 (710 aa).

N-acetylserine is present on S2. PPR repeat units lie at residues 35-64 (NELL…NQSS), 68-98 (DAYQ…MPER), 99-133 (NVVS…GESR), 135-169 (NEFV…GLIS), 170-200 (HEFV…LPYC), 201-235 (DLSV…DFVW), 236-270 (NNLT…GFNA), 271-301 (EVEA…THAQ), 302-336 (NIFL…EVPP), 337-371 (NEYT…GYRN), 372-402 (HVMV…MTFR), 403-437 (DIVT…GEIP), 438-473 (NRIT…DVQP), and 474-504 (DIQH…APIE). The type E motif stretch occupies residues 509–584 (AWRTLLNACY…EPGVSWIGIR (76 aa)). The type E(+) motif stretch occupies residues 585–615 (NQTHVFLAEDNQHPEITLIYAKVKEVMSKIK). The interval 616 to 710 (PLGYSPDVAG…DGQCSCCDYW (95 aa)) is type DYW motif.

Belongs to the PPR family. PCMP-H subfamily.

The protein is Pentatricopeptide repeat-containing protein At5g39680 (EMB2744) of Arabidopsis thaliana (Mouse-ear cress).